The following is a 1896-amino-acid chain: RNA replication protein (1896 aa).

The Alphavirus-like MT domain occupies 60-227 (IHDSPLSHSH…NQPLAAHQWM (168 aa)). 2 disordered regions span residues 828–866 (GREDYGPPPPPPPPSTTEPPPPPNPPAASPYHSPTVEDE) and 891–987 (DDLN…SNDK). Pro residues predominate over residues 833–855 (GPPPPPPPPSTTEPPPPPNPPAA). Low complexity predominate over residues 945–959 (PSDATPTPAARAPSS). Residues 996 to 1003 (ARLVAGKT) and 1059 to 1066 (GLPGTGKS) contribute to the ATP site. In terms of domain architecture, (+)RNA virus helicase ATP-binding spans 1025-1194 (IGTIPTAEAE…AIASYAHEYR (170 aa)). Residues 1195–1327 (RVSDRPAPGV…FRTDPHKLPL (133 aa)) form the (+)RNA virus helicase C-terminal domain. The disordered stretch occupies residues 1347-1385 (AVPRRNAASNPDALPSQRILPGGQSTTAEPXQSQASALP). The segment covering 1369-1383 (GQSTTAEPXQSQASA) has biased composition (polar residues). One can recognise a RdRp catalytic domain in the interval 1668-1774 (RESTDGDYTA…NSPITVRTGW (107 aa)).

The catalysed reaction is ATP + H2O = ADP + phosphate + H(+). It carries out the reaction RNA(n) + a ribonucleoside 5'-triphosphate = RNA(n+1) + diphosphate. Its function is as follows. RNA replication protein replicates the viral genomic RNA. The central part of this protein possibly functions as an ATP-binding helicase and/or methyltransferase. The polypeptide is RNA replication protein (Botrytis virus F (isolate Botrytis cinerea/New Zealand/Howitt/2001) (BotV-F)).